A 243-amino-acid chain; its full sequence is MHVSRIIAHIALATAITATTVSPTDAAWGWTVKSTDEVKADKRDLVASRGLRGLIGQASPNEVSPANVPVSGIPLLGDKQPSGYPMLPADSPSTGSSLLNDDLLQENPVPPANGLVHGVPLLSSNQPLQTPMLSGNGPITGYRFFSGNESPMLPANSPITGLPLLSGNIPSTFEGEQISNGDEYQQNVDEDKGQNFGHSVSGPPTTTLTGPHTKSGIPPFENLVAPAKGSMPNTRRNGYQFFE.

Residues 1–26 (MHVSRIIAHIALATAITATTVSPTDA) form the signal peptide. A RxLR motif is present at residues 49 to 52 (RGLR). The tract at residues 187 to 243 (NVDEDKGQNFGHSVSGPPTTTLTGPHTKSGIPPFENLVAPAKGSMPNTRRNGYQFFE) is disordered. Over residues 199–216 (SVSGPPTTTLTGPHTKSG) the composition is skewed to low complexity.

It belongs to the RxLR effector family.

It localises to the secreted. The protein resides in the host cytoplasm. The protein localises to the host nucleus. In terms of biological role, effector that significantly enhances susceptibilities of grapevine and tobacco to pathogens. Acts as a broad suppressor of cell death to interrupt plant immunity. Completely inhibits cell death induced by cell death-inducing proteins, including the PAMP elicitor INF1 from P.infestans. Reduces the transcriptional levels of the defense-related genes and impairs the H(2)O(2) accumulation in N.benthamiana. In Plasmopara viticola (Downy mildew of grapevine), this protein is Secreted RxLR effector protein 28.